Reading from the N-terminus, the 293-residue chain is Shikimate dehydrogenase (NADP(+)) (293 aa).

Residues 20 to 22 and threonine 72 contribute to the shikimate site; that span reads SLT. Catalysis depends on lysine 76, which acts as the Proton acceptor. The shikimate site is built by asparagine 97 and aspartate 112. Residues 136 to 140 and isoleucine 230 each bind NADP(+); that span reads GAGGA. Tyrosine 232 contributes to the shikimate binding site. Glycine 253 serves as a coordination point for NADP(+).

The protein belongs to the shikimate dehydrogenase family. In terms of assembly, homodimer.

It catalyses the reaction shikimate + NADP(+) = 3-dehydroshikimate + NADPH + H(+). The protein operates within metabolic intermediate biosynthesis; chorismate biosynthesis; chorismate from D-erythrose 4-phosphate and phosphoenolpyruvate: step 4/7. Functionally, involved in the biosynthesis of the chorismate, which leads to the biosynthesis of aromatic amino acids. Catalyzes the reversible NADPH linked reduction of 3-dehydroshikimate (DHSA) to yield shikimate (SA). The chain is Shikimate dehydrogenase (NADP(+)) from Arthrobacter sp. (strain FB24).